Consider the following 1342-residue polypeptide: DNA-directed RNA polymerase subunit beta (1342 aa).

The protein belongs to the RNA polymerase beta chain family. In terms of assembly, the RNAP catalytic core consists of 2 alpha, 1 beta, 1 beta' and 1 omega subunit. When a sigma factor is associated with the core the holoenzyme is formed, which can initiate transcription.

It carries out the reaction RNA(n) + a ribonucleoside 5'-triphosphate = RNA(n+1) + diphosphate. Its function is as follows. DNA-dependent RNA polymerase catalyzes the transcription of DNA into RNA using the four ribonucleoside triphosphates as substrates. The chain is DNA-directed RNA polymerase subunit beta from Pasteurella multocida (strain Pm70).